The sequence spans 61 residues: Large ribosomal subunit protein uL30 (61 aa).

The protein belongs to the universal ribosomal protein uL30 family. Part of the 50S ribosomal subunit.

The protein is Large ribosomal subunit protein uL30 of Thermosipho africanus (strain TCF52B).